A 194-amino-acid chain; its full sequence is Ancillary SecYEG translocon subunit (194 aa).

Residues 1 to 10 (MHLNKMKKVS) are Cytoplasmic-facing. The chain crosses the membrane as a helical span at residues 11–31 (LKTYLVLFFLIFFIFCSFWFI). Residues 32-194 (KPKEKKLKLE…INMKINEIKR (163 aa)) are Periplasmic-facing.

Belongs to the YfgM family. In terms of assembly, interacts with the SecYEG translocon. Forms a complex with PpiD.

The protein localises to the cell inner membrane. In terms of biological role, may mediate protein transfer from the SecYEG translocon to the periplasmic chaperone network via its periplasmic C-terminal region. This chain is Ancillary SecYEG translocon subunit, found in Buchnera aphidicola subsp. Schizaphis graminum (strain Sg).